We begin with the raw amino-acid sequence, 862 residues long: MSTKDFNISRDEFRNITRCLDNEEFRNLFMEYCTELRDNRKQYEDELSMLEAQRGYDVKFLKPSPGYVIKTIVDGKGKGFINVCQSELVQKPTSTTGLNEDGTKGLKWSVPYAQTQPRKDYDNKRVECTVYDVMFHPDALHLASKNEGFRKLLNDTSLDAVEQSFKVRLDRANLRFPKLQYKGTPSSSVVREKLPHCDSLPKDELFDKLLPPLPNVPAPGKTGSERTTKTKNKENINRTAAVAAAAASPGNPFYTTPEYKIVQCRDVEYGEMTNELDAKIDVTIPRELKVVITLPLLKSTAECALDVTKTTLHLVSEKPARYKLELKLPYEVKESEGKATFNVEARSLTVTLPVLRKRNITLQDINSANVSASPAKEAGKLIEEIGTIIPPAGGDQQLARAASAPSAPEVPKKTIFPKFSVNKMENLLAFTLNVRNVDPSTIQLDNRTDSVHCRFSNVGNGYFPCFYVFFVRFPNALVTDVQHEEWDNNLIIQITLNTASVSSYQAGPDEHETVEYSIMEDIADKINKFGKEIEDDSLCIAVVRQATKASAKVKADALMSIEITKREEHGEPECDEKDGSEAEKARTLQKAKRNSRKKKKERSLSDSFCDHLKVIVENEASTEVAGEGATIQSSAKPIDSPEAKARKARSISECCPPKESDGGEEASTMPTLTRKYKSILKRSSYDRSISECSSVDDLGTSVEMARSIGEECRKTVRFNNSIRKQLFRSNSCILTMKKKALKRREVKRRADARRMSEGESTDNDEKDAHHHDDEHCSSSDQHDEKDAIEDDSGVSFDSESGDKEIAAAMKAEAIGGGGRGKAASKRKNSNKQGGAKSNGGKKQGTDAKNIQFKSDMIFDIEI.

Disordered stretches follow at residues K208 to K229, T564 to R602, G626 to P670, and R743 to S854. Residues T564–R586 show a composition bias toward basic and acidic residues. The span at T587 to E601 shows a compositional bias: basic residues. 2 stretches are compositionally biased toward basic and acidic residues: residues R748 to E757 and K766 to K785.

This sequence belongs to the PIH1 family. Kintoun subfamily.

The protein resides in the cytoplasm. Its function is as follows. Required for cytoplasmic pre-assembly of axonemal dyneins, thereby playing a central role in motility in cilia and flagella. Involved in pre-assembly of dynein arm complexes in the cytoplasm before intraflagellar transport loads them for the ciliary compartment. This chain is Protein kintoun, found in Anopheles gambiae (African malaria mosquito).